The sequence spans 238 residues: Ribonuclease HII (238 aa).

In terms of domain architecture, RNase H type-2 spans 12-197 (GIVAGVDEAG…VLELLTDDLL (186 aa)). A divalent metal cation-binding residues include aspartate 18, glutamate 19, and aspartate 107.

This sequence belongs to the RNase HII family. Mn(2+) is required as a cofactor. The cofactor is Mg(2+).

It localises to the cytoplasm. It catalyses the reaction Endonucleolytic cleavage to 5'-phosphomonoester.. Endonuclease that specifically degrades the RNA of RNA-DNA hybrids. The chain is Ribonuclease HII (rnhB) from Thermotoga maritima (strain ATCC 43589 / DSM 3109 / JCM 10099 / NBRC 100826 / MSB8).